Consider the following 799-residue polypeptide: 1,4-alpha-glucan-branching enzyme 2, chloroplastic/amyloplastic (799 aa).

The N-terminal 57 residues, 1-57 (MAFRVSGAVLGGAVRAPRLTGGGEGSLVFRHTGLFLTRGARVGCSGTHGAMRAAAAA), are a transit peptide targeting the chloroplast. (1,4-alpha-D-glucosyl)n is bound by residues Trp196 and Lys232. Asp447 (nucleophile) is an active-site residue. Glu502 functions as the Proton donor in the catalytic mechanism.

It belongs to the glycosyl hydrolase 13 family. GlgB subfamily. In terms of assembly, monomer.

It localises to the plastid. It is found in the chloroplast. Its subcellular location is the amyloplast. It carries out the reaction Transfers a segment of a (1-&gt;4)-alpha-D-glucan chain to a primary hydroxy group in a similar glucan chain.. It functions in the pathway glycan biosynthesis; starch biosynthesis. Its function is as follows. Catalyzes the formation of the alpha-1,6-glucosidic linkages in starch by scission of a 1,4-alpha-linked oligosaccharide from growing alpha-1,4-glucan chains and the subsequent attachment of the oligosaccharide to the alpha-1,6 position. The protein is 1,4-alpha-glucan-branching enzyme 2, chloroplastic/amyloplastic (SBE1) of Zea mays (Maize).